A 230-amino-acid chain; its full sequence is Ribonuclease 3 (230 aa).

The region spanning 6–135 (TTELKERYGI…FLGALYLDQK (130 aa)) is the RNase III domain. Glu-48 is a Mg(2+) binding site. Asp-52 is an active-site residue. 2 residues coordinate Mg(2+): Asp-121 and Glu-124. Residue Glu-124 is part of the active site. The region spanning 161–230 (DHKTQLQEVL…AERALKSIPQ (70 aa)) is the DRBM domain.

Belongs to the ribonuclease III family. In terms of assembly, homodimer. Requires Mg(2+) as cofactor.

It is found in the cytoplasm. The catalysed reaction is Endonucleolytic cleavage to 5'-phosphomonoester.. In terms of biological role, digests double-stranded RNA. Involved in the processing of primary rRNA transcript to yield the immediate precursors to the large and small rRNAs (23S and 16S). Processes some mRNAs, and tRNAs when they are encoded in the rRNA operon. Processes pre-crRNA and tracrRNA of type II CRISPR loci if present in the organism. The chain is Ribonuclease 3 from Enterococcus faecalis (strain ATCC 700802 / V583).